Reading from the N-terminus, the 102-residue chain is U7-agatoxin-Ao1a (102 aa).

Positions 1 to 19 (MTQAFFFLLLVSLVASTLS) are cleaved as a signal peptide. Residues 20–39 (KEFNFCPRAIDEVCPVKEKR) constitute a propeptide that is removed on maturation. Trp-101 is modified (tryptophan amide).

This sequence belongs to the venom protein 11 family. 02 (wap-2) subfamily. Contains 5 disulfide bonds. In terms of tissue distribution, expressed by the venom gland.

It is found in the secreted. This is U7-agatoxin-Ao1a from Agelena orientalis (Funnel-web spider).